Reading from the N-terminus, the 256-residue chain is L-erythrulose-1-phosphate isomerase (256 aa).

The Electrophile role is filled by H96. Catalysis depends on E169, which acts as the Proton acceptor. G175 and S212 together coordinate substrate.

The protein belongs to the triosephosphate isomerase family. In terms of assembly, homodimer.

It localises to the cytoplasm. It catalyses the reaction L-erythrulose 1-phosphate = D-erythrulose 4-phosphate. Its pathway is carbohydrate metabolism; erythritol degradation. In terms of biological role, catalyzes the isomerization of D-erythrulose-4P to L-erythrulose-1P. Involved in the degradation pathway of erythritol, that allows B.abortus to grow on this compound as the sole carbon source. The polypeptide is L-erythrulose-1-phosphate isomerase (Brucella abortus (strain 2308)).